Here is a 328-residue protein sequence, read N- to C-terminus: GTP 3',8-cyclase (328 aa).

A Radical SAM core domain is found at 1–229 (MNQVDYLRIS…DAQVRGSGPA (229 aa)). GTP is bound at residue Arg8. [4Fe-4S] cluster is bound by residues Cys15 and Cys19. Tyr21 contributes to the S-adenosyl-L-methionine binding site. Cys22 contacts [4Fe-4S] cluster. Residue Arg60 participates in GTP binding. Residue Gly64 coordinates S-adenosyl-L-methionine. A GTP-binding site is contributed by Thr91. Ser115 contributes to the S-adenosyl-L-methionine binding site. GTP is bound at residue Lys155. Residue Met189 participates in S-adenosyl-L-methionine binding. [4Fe-4S] cluster is bound by residues Cys252 and Cys255. 257–259 (RMR) contributes to the GTP binding site. A [4Fe-4S] cluster-binding site is contributed by Cys269.

Belongs to the radical SAM superfamily. MoaA family. In terms of assembly, monomer and homodimer. [4Fe-4S] cluster is required as a cofactor.

It carries out the reaction GTP + AH2 + S-adenosyl-L-methionine = (8S)-3',8-cyclo-7,8-dihydroguanosine 5'-triphosphate + 5'-deoxyadenosine + L-methionine + A + H(+). It participates in cofactor biosynthesis; molybdopterin biosynthesis. In terms of biological role, catalyzes the cyclization of GTP to (8S)-3',8-cyclo-7,8-dihydroguanosine 5'-triphosphate. The sequence is that of GTP 3',8-cyclase from Trichormus variabilis (strain ATCC 29413 / PCC 7937) (Anabaena variabilis).